We begin with the raw amino-acid sequence, 636 residues long: Rik1-associated factor 2 (636 aa).

As to quaternary structure, component of the Clr4 methyltransferase complex (ClrC) composed of at least clr4, rik1, pcu4, rbx1, raf1 and raf2. The cullin pcu4, rik1, raf1, raf2 and the ring-box protein rbx1 are components of an E3 ubiquitin ligase, whose activity is essential for heterochromatin assembly. Interacts with pcu4.

The protein resides in the cytoplasm. It is found in the mitochondrion. It localises to the nucleus. Its subcellular location is the chromosome. Component of the Clr4 methyltransferase complex (ClrC) which contributes to the establishment of heterochromatin by specifically methylating histone H3 to form H3K9me. ClrC preferentially ubiquitylates H3K14 and ClrC-mediated H3 ubiquitination promotes clr4 methyltransferase activity for the methylation of H3K9. H3K9me represents a specific tag for epigenetic transcriptional repression by recruiting swi6/HP1 to methylated histones which leads to transcriptional silencing within centromeric heterochromatin, telomeric regions and at the silent mating-type loci. Has a role in both mitotic and meiotic chromosome segregation. The sequence is that of Rik1-associated factor 2 (raf2) from Schizosaccharomyces pombe (strain 972 / ATCC 24843) (Fission yeast).